We begin with the raw amino-acid sequence, 182 residues long: MKLQLALVLCGLTLALGQIVPRSSWCPVPISPRIPRLMVPVRLIIIHHTVTAPCFNPHQCQLVLRQIRADHMRRKFRDIGYNFLIGGDGRIYEGLGFGIRGEHAPRYNSQSIGIAFIGNFQTGLPPSQMLQAARTLIQIAVQRRQVSPNYSLVGHCQTKATACPGRHLLNELKKWPRWQPKP.

The signal sequence occupies residues 1-17 (MKLQLALVLCGLTLALG). One can recognise an N-acetylmuramoyl-L-alanine amidase domain in the interval 40–165 (PVRLIIIHHT…CQTKATACPG (126 aa)). Position 47 (histidine 47) interacts with Zn(2+). An intrachain disulfide couples cysteine 54 to cysteine 60. N-linked (GlcNAc...) asparagine glycosylation occurs at asparagine 149. Zn(2+)-binding residues include histidine 155 and cysteine 163.

It belongs to the N-acetylmuramoyl-L-alanine amidase 2 family. Zn(2+) serves as cofactor.

It is found in the secreted. It carries out the reaction Hydrolyzes the link between N-acetylmuramoyl residues and L-amino acid residues in certain cell-wall glycopeptides.. Functionally, N-acetylmuramyl-L-alanine amidase involved in innate immunity by degrading bacterial peptidoglycans (PGN). Probably plays a scavenger role by digesting biologically active PGN into biologically inactive fragments. Has no direct bacteriolytic activity. The polypeptide is Peptidoglycan-recognition protein SB2 (PGRP-SB2) (Drosophila simulans (Fruit fly)).